The sequence spans 404 residues: Spore germination protein YndF (404 aa).

A signal peptide spans 1–24; that stretch reads MKSKLKRQLPAMVIVCLLMICVTG. Residue Cys25 is the site of N-palmitoyl cysteine attachment. Cys25 carries S-diacylglycerol cysteine lipidation.

It belongs to the GerABKC lipoprotein family.

Its subcellular location is the cell membrane. Functionally, may be involved in spore germination. The sequence is that of Spore germination protein YndF (yndF) from Bacillus subtilis (strain 168).